The primary structure comprises 159 residues: Ribosomal RNA large subunit methyltransferase H (159 aa).

S-adenosyl-L-methionine-binding positions include Leu76, Gly108, and 127–132 (FGLLTL).

The protein belongs to the RNA methyltransferase RlmH family. Homodimer.

It localises to the cytoplasm. It catalyses the reaction pseudouridine(1915) in 23S rRNA + S-adenosyl-L-methionine = N(3)-methylpseudouridine(1915) in 23S rRNA + S-adenosyl-L-homocysteine + H(+). In terms of biological role, specifically methylates the pseudouridine at position 1915 (m3Psi1915) in 23S rRNA. This is Ribosomal RNA large subunit methyltransferase H from Streptococcus equi subsp. zooepidemicus (strain H70).